Here is a 505-residue protein sequence, read N- to C-terminus: Aminoaldehyde dehydrogenase 2 (505 aa).

Na(+) contacts are provided by Ile-31 and Asp-99. NAD(+) is bound by residues 159–161 (TPW) and 185–188 (KPSE). Residue Leu-189 coordinates Na(+). NAD(+) is bound at residue 238 to 242 (GSGPT). Glu-260 acts as the Proton acceptor in catalysis. Residue Leu-261 coordinates NAD(+). The active-site Nucleophile is the Cys-295. 2 residues coordinate NAD(+): Glu-394 and Trp-460.

Belongs to the aldehyde dehydrogenase family. Forms homodimers.

It carries out the reaction 4-aminobutanal + NAD(+) + H2O = 4-aminobutanoate + NADH + 2 H(+). The enzyme catalyses 3-aminopropanal + NAD(+) + H2O = beta-alanine + NADH + 2 H(+). It catalyses the reaction 4-(trimethylamino)butanal + NAD(+) + H2O = 4-(trimethylamino)butanoate + NADH + 2 H(+). The catalysed reaction is 4-guanidinobutanal + NAD(+) + H2O = 4-guanidinobutanoate + NADH + 2 H(+). It functions in the pathway amine and polyamine biosynthesis; betaine biosynthesis via choline pathway; betaine from betaine aldehyde: step 1/1. In terms of biological role, dehydrogenase that catalyzes the oxidation of several aminoaldehydes. Metabolizes and detoxifies aldehyde products of polyamine degradation to non-toxic amino acids. Catalyzes the oxidation of 4-aminobutanal and 3-aminopropanal to 4-aminobutanoate and beta-alanine, respectively. Catalyzes the oxidation of 4-(trimethylamino)butanal and 4-guanidinobutanal to 4-trimethylammoniobutanoate and 4-guanidinobutanoate, respectively. This Solanum lycopersicum (Tomato) protein is Aminoaldehyde dehydrogenase 2.